The chain runs to 245 residues: Protein crossbronx (245 aa).

The region spanning 20–177 (QQEYKILAEY…VQESIVESKS (158 aa)) is the UBC core domain.

This sequence belongs to the ubiquitin-conjugating enzyme family. FTS subfamily.

The chain is Protein crossbronx (cbx) from Drosophila virilis (Fruit fly).